The sequence spans 216 residues: Uracil phosphoribosyltransferase (216 aa).

5-phospho-alpha-D-ribose 1-diphosphate contacts are provided by residues Arg-85, Arg-110, and 135–143 (DPMVATGYS). Uracil contacts are provided by residues Ile-200 and 205 to 207 (GDA). Residue Asp-206 coordinates 5-phospho-alpha-D-ribose 1-diphosphate.

The protein belongs to the UPRTase family. The cofactor is Mg(2+).

It catalyses the reaction UMP + diphosphate = 5-phospho-alpha-D-ribose 1-diphosphate + uracil. It participates in pyrimidine metabolism; UMP biosynthesis via salvage pathway; UMP from uracil: step 1/1. With respect to regulation, allosterically activated by GTP. Functionally, catalyzes the conversion of uracil and 5-phospho-alpha-D-ribose 1-diphosphate (PRPP) to UMP and diphosphate. This Burkholderia lata (strain ATCC 17760 / DSM 23089 / LMG 22485 / NCIMB 9086 / R18194 / 383) protein is Uracil phosphoribosyltransferase.